A 307-amino-acid chain; its full sequence is Protoheme IX farnesyltransferase (307 aa).

The next 8 helical transmembrane spans lie at 24-44, 52-72, 115-135, 152-172, 179-199, 224-244, 245-265, and 284-304; these read ISLLKPRVMSLVIFTALVGLV, PVIAFTAILCIAVGAGAAGAL, VVLGLLVNVLAGALLAFTIFF, IVIGGLSGALPPMVAWAAASG, VILVAIIFFWTPPHFWALSLY, QILLYTLFLVPLALSPVMLGE, AGLAYGVVAGVTGLGMLLLAV, and FGFSILYLFLLFATLLAEALV.

It belongs to the UbiA prenyltransferase family. Protoheme IX farnesyltransferase subfamily.

It is found in the cell inner membrane. The enzyme catalyses heme b + (2E,6E)-farnesyl diphosphate + H2O = Fe(II)-heme o + diphosphate. It functions in the pathway porphyrin-containing compound metabolism; heme O biosynthesis; heme O from protoheme: step 1/1. Its function is as follows. Converts heme B (protoheme IX) to heme O by substitution of the vinyl group on carbon 2 of heme B porphyrin ring with a hydroxyethyl farnesyl side group. The protein is Protoheme IX farnesyltransferase of Azorhizobium caulinodans (strain ATCC 43989 / DSM 5975 / JCM 20966 / LMG 6465 / NBRC 14845 / NCIMB 13405 / ORS 571).